The chain runs to 168 residues: Thermonuclease (168 aa).

The signal sequence occupies residues 1-27; the sequence is MKKITTGVLILAIAIVVLIFQYINGDG. Active-site residues include arginine 64, glutamate 72, and arginine 114.

It belongs to the thermonuclease family. Requires Ca(2+) as cofactor.

The protein resides in the secreted. The catalysed reaction is Endonucleolytic cleavage to nucleoside 3'-phosphates and 3'-phosphooligonucleotide end-products.. Enzyme that catalyzes the hydrolysis of both DNA and RNA at the 5'-position of the phosphodiester bond. This is Thermonuclease (nucI) from Staphylococcus intermedius.